A 572-amino-acid chain; its full sequence is Sulfite reductase [NADPH] hemoprotein beta-component (572 aa).

The [4Fe-4S] cluster site is built by cysteine 437, cysteine 443, cysteine 482, and cysteine 486. Siroheme is bound at residue cysteine 486.

Belongs to the nitrite and sulfite reductase 4Fe-4S domain family. Alpha(8)-beta(8). The alpha component is a flavoprotein, the beta component is a hemoprotein. It depends on siroheme as a cofactor. [4Fe-4S] cluster is required as a cofactor.

The enzyme catalyses hydrogen sulfide + 3 NADP(+) + 3 H2O = sulfite + 3 NADPH + 4 H(+). It functions in the pathway sulfur metabolism; hydrogen sulfide biosynthesis; hydrogen sulfide from sulfite (NADPH route): step 1/1. Component of the sulfite reductase complex that catalyzes the 6-electron reduction of sulfite to sulfide. This is one of several activities required for the biosynthesis of L-cysteine from sulfate. The protein is Sulfite reductase [NADPH] hemoprotein beta-component of Staphylococcus epidermidis (strain ATCC 12228 / FDA PCI 1200).